Consider the following 103-residue polypeptide: Pyrimidine/purine nucleoside phosphorylase (103 aa).

Belongs to the nucleoside phosphorylase PpnP family.

It carries out the reaction a purine D-ribonucleoside + phosphate = a purine nucleobase + alpha-D-ribose 1-phosphate. It catalyses the reaction adenosine + phosphate = alpha-D-ribose 1-phosphate + adenine. The catalysed reaction is cytidine + phosphate = cytosine + alpha-D-ribose 1-phosphate. The enzyme catalyses guanosine + phosphate = alpha-D-ribose 1-phosphate + guanine. It carries out the reaction inosine + phosphate = alpha-D-ribose 1-phosphate + hypoxanthine. It catalyses the reaction thymidine + phosphate = 2-deoxy-alpha-D-ribose 1-phosphate + thymine. The catalysed reaction is uridine + phosphate = alpha-D-ribose 1-phosphate + uracil. The enzyme catalyses xanthosine + phosphate = alpha-D-ribose 1-phosphate + xanthine. Catalyzes the phosphorolysis of diverse nucleosides, yielding D-ribose 1-phosphate and the respective free bases. Can use uridine, adenosine, guanosine, cytidine, thymidine, inosine and xanthosine as substrates. Also catalyzes the reverse reactions. The chain is Pyrimidine/purine nucleoside phosphorylase from Shewanella baltica (strain OS195).